The primary structure comprises 201 residues: Probable nicotinate-nucleotide adenylyltransferase (201 aa).

This sequence belongs to the NadD family.

The enzyme catalyses nicotinate beta-D-ribonucleotide + ATP + H(+) = deamido-NAD(+) + diphosphate. The protein operates within cofactor biosynthesis; NAD(+) biosynthesis; deamido-NAD(+) from nicotinate D-ribonucleotide: step 1/1. Functionally, catalyzes the reversible adenylation of nicotinate mononucleotide (NaMN) to nicotinic acid adenine dinucleotide (NaAD). The sequence is that of Probable nicotinate-nucleotide adenylyltransferase from Clostridium botulinum (strain Loch Maree / Type A3).